The primary structure comprises 1382 residues: Hepatocyte growth factor receptor (1382 aa).

The N-terminal stretch at 1-24 (MKAPAVLAPGILVLLFTLVQKSYG) is a signal peptide. Residues 25–935 (ECKEALVKSE…VQPDQNFTGL (911 aa)) lie on the Extracellular side of the membrane. The region spanning 27-516 (KEALVKSEMN…TGKKITRIPL (490 aa)) is the Sema domain. N-linked (GlcNAc...) asparagine glycosylation occurs at Asn-45. 4 cysteine pairs are disulfide-bonded: Cys-95–Cys-101, Cys-98–Cys-160, Cys-133–Cys-141, and Cys-173–Cys-176. Asn-106 carries an N-linked (GlcNAc...) asparagine glycan. Residues Asn-203 and Asn-359 are each glycosylated (N-linked (GlcNAc...) asparagine). 2 disulfide bridges follow: Cys-299/Cys-364 and Cys-386/Cys-398. N-linked (GlcNAc...) asparagine glycosylation is found at Asn-400 and Asn-406. 4 cysteine pairs are disulfide-bonded: Cys-521–Cys-539, Cys-527–Cys-562, Cys-530–Cys-546, and Cys-542–Cys-552. IPT/TIG domains are found at residues 564-656 (PAIY…FSYV), 658-740 (PIIT…FSYQ), and 743-837 (PIVY…LIYV). O-linked (Man) threonine glycosylation occurs at Thr-583. Asn-608 and Asn-636 each carry an N-linked (GlcNAc...) asparagine glycan. O-linked (Man) threonine glycans are attached at residues Thr-677 and Thr-762. Asn-786, Asn-880, and Asn-931 each carry an N-linked (GlcNAc...) asparagine glycan. Residues 936–956 (IAGVISISTIVLLLLGLFLWL) traverse the membrane as a helical segment. The Cytoplasmic portion of the chain corresponds to 957-1379 (KRKKQIKDLG…LSSQDNIDGE (423 aa)). Ser-967 carries the post-translational modification Phosphoserine. At Thr-978 the chain carries Phosphothreonine. Ser-991, Ser-998, and Ser-1001 each carry phosphoserine. Residue Tyr-1004 is modified to Phosphotyrosine. Residues 1079–1346 (VHFNEVIGRG…RISAIFSTFI (268 aa)) form the Protein kinase domain. ATP is bound by residues 1085 to 1093 (IGRGHFGCV) and Lys-1111. The active-site Proton acceptor is Asp-1205. An interaction with RANBP9 region spans residues 1213-1382 (LDEKFTVKVA…QDNIDGEGDT (170 aa)). At Tyr-1231 the chain carries Phosphotyrosine. Residues Tyr-1235 and Tyr-1236 each carry the phosphotyrosine; by autocatalysis modification. Thr-1290 is modified (phosphothreonine). Residues 1321-1360 (WHPRAELRPSFSELVSRISAIFSTFIGEHYVHVNATYVNV) are interaction with MUC20. Tyr-1350 and Tyr-1357 each carry phosphotyrosine; by autocatalysis. Residue Tyr-1366 is modified to Phosphotyrosine.

This sequence belongs to the protein kinase superfamily. Tyr protein kinase family. In terms of assembly, heterodimer made of an alpha chain (50 kDa) and a beta chain (145 kDa) which are disulfide linked. Binds PLXNB1. Interacts when phosphorylated with downstream effectors including STAT3, PIK3R1, SRC, PCLG1, GRB2 and GAB1. Interacts with SPSB1, SPSB2 and SPSB4. Interacts with INPP5D/SHIP1. When phosphorylated at Tyr-1357, interacts with INPPL1/SHIP2. Interacts with RANBP9 and RANBP10, as well as SPSB1, SPSB2, SPSB3 and SPSB4. SPSB1 binding occurs in the presence and in the absence of HGF, however HGF treatment has a positive effect on this interaction. Interacts with MUC20; prevents interaction with GRB2 and suppresses hepatocyte growth factor-induced cell proliferation. Interacts with GRB10. Interacts with PTPN1 and PTPN2. Interacts with HSP90AA1 and HSP90AB1; the interaction suppresses MET kinase activity. Interacts with tensin TNS3. Interacts (when phosphorylated) with tensin TNS4 (via SH2 domain); the interaction increases MET protein stability by inhibiting MET endocytosis and subsequent lysosomal degradation. As to quaternary structure, (Microbial infection) Interacts with L.monocytogenes InlB. InlB probably dimerizes upon binding to MET, which encourages subsequent dimerization of MET. Post-translationally, autophosphorylated in response to ligand binding on Tyr-1235 and Tyr-1236 in the kinase domain leading to further phosphorylation of Tyr-1350 and Tyr-1357 in the C-terminal multifunctional docking site. Dephosphorylated by PTPRJ at Tyr-1350 and Tyr-1366. Dephosphorylated by PTPN1 and PTPN2. Ubiquitinated. Ubiquitination by CBL regulates the receptor stability and activity through proteasomal degradation. In terms of processing, (Microbial infection) Tyrosine phosphorylation is stimulated by L.monocytogenes InlB. Post-translationally, O-mannosylation of IPT/TIG domains by TMEM260 is required for protein maturation. O-mannosylated residues are composed of single mannose glycans that are not elongated or modified.

It localises to the membrane. It catalyses the reaction L-tyrosyl-[protein] + ATP = O-phospho-L-tyrosyl-[protein] + ADP + H(+). Its activity is regulated as follows. In its inactive state, the C-terminal tail interacts with the catalytic domain and inhibits the kinase activity. Upon ligand binding, the C-terminal tail is displaced and becomes phosphorylated, thus increasing the kinase activity. Functionally, receptor tyrosine kinase that transduces signals from the extracellular matrix into the cytoplasm by binding to hepatocyte growth factor/HGF ligand. Regulates many physiological processes including proliferation, scattering, morphogenesis and survival. Ligand binding at the cell surface induces autophosphorylation of MET on its intracellular domain that provides docking sites for downstream signaling molecules. Following activation by ligand, interacts with the PI3-kinase subunit PIK3R1, PLCG1, SRC, GRB2, STAT3 or the adapter GAB1. Recruitment of these downstream effectors by MET leads to the activation of several signaling cascades including the RAS-ERK, PI3 kinase-AKT, or PLCgamma-PKC. The RAS-ERK activation is associated with the morphogenetic effects while PI3K/AKT coordinates prosurvival effects. During embryonic development, MET signaling plays a role in gastrulation, development and migration of muscles and neuronal precursors, angiogenesis and kidney formation. In adults, participates in wound healing as well as organ regeneration and tissue remodeling. Also promotes differentiation and proliferation of hematopoietic cells. (Microbial infection) Acts as a receptor for Listeria monocytogenes internalin InlB, mediating entry of the pathogen into cells. This Canis lupus familiaris (Dog) protein is Hepatocyte growth factor receptor (MET).